Consider the following 1736-residue polypeptide: Collagen alpha-2(XI) chain (1736 aa).

An N-terminal signal peptide occupies residues 1 to 27 (MERCSRCHHLLLLVLLLLWLSAAPAWA). Residues 57–228 (DVAYRVSRPA…ESCDQKELEC (172 aa)) form the Laminin G-like domain. The nonhelical region stretch occupies residues 215 to 486 (QAAYESCDQK…ILQQARVALR (272 aa)). Disordered regions lie at residues 229 to 465 (EGGW…DKGP) and 485 to 1539 (LRGP…SPGG). A compositionally biased stretch (polar residues) spans 258–270 (PQNQEPQAQSTES). Residues 363-376 (ALSAETARSEAAAR) show a composition bias toward low complexity. Collagen-like domains are found at residues 399–447 (GPPG…GPPG), 487–545 (GPPG…ADGA), and 546–587 (RGMP…PPGE). The segment covering 400 to 413 (PPGPEGPAGFPGPP) has biased composition (pro residues). The interval 487–1500 (GPPGPMGYTG…PGHPGPPGEV (1014 aa)) is triple-helical region. Residues 515-533 (DLGPQGPRGPQGLMGPPGK) show a composition bias toward low complexity. The span at 615-624 (KGPPGIPGPP) shows a compositional bias: pro residues. Positions 650-663 (QQGTPGTQGLPGPQ) are enriched in low complexity. A compositionally biased stretch (basic and acidic residues) spans 765–774 (RGEDGPEGPK). Residues 842–861 (PTGPRGQRGPRGATGKSGAK) are compositionally biased toward low complexity. A compositionally biased stretch (gly residues) spans 994 to 1003 (GTAGGPGLKG). Residues 1029–1040 (IGPPGRPGPQGP) are compositionally biased toward pro residues. Collagen-like domains follow at residues 1072–1127 (GPAG…ADGE) and 1128–1172 (PGAR…ETGD). The segment covering 1115–1133 (PVGQPGAAGADGEPGARGP) has biased composition (low complexity). The span at 1176–1187 (MGPPGPPGPRGP) shows a compositional bias: pro residues. The segment covering 1217-1230 (ESGSPGVQGEPGVK) has biased composition (low complexity). 2 stretches are compositionally biased toward basic and acidic residues: residues 1232–1241 (PRGERGEKGE) and 1287–1296 (DGAKGDRGED). 2 stretches are compositionally biased toward low complexity: residues 1341–1364 (PGAV…KPGP) and 1376–1386 (QQGRPGATGQA). Pro residues predominate over residues 1388 to 1397 (PPGPVGPPGL). Positions 1413-1422 (PGLIGLIGPP) are enriched in low complexity. The region spanning 1444 to 1499 (GETGIPGASGPIGPGGPPGLPGPAGPKGAKGATGPAGPKGEKGVQGPPGHPGPPGE) is the Collagen-like 6 domain. The segment covering 1457–1467 (PGGPPGLPGPA) has biased composition (pro residues). Low complexity predominate over residues 1469 to 1481 (PKGAKGATGPAGP). A propeptide spans 1501–1736 (IQPLPIQMPK…VLLGPVCFMG (236 aa)) (C-terminal propeptide). One can recognise a Fibrillar collagen NC1 domain in the interval 1541-1735 (EEIFGSLDSL…GVLLGPVCFM (195 aa)). Cys1571 and Cys1603 are joined by a disulfide. Positions 1589, 1591, 1592, 1594, and 1597 each coordinate Ca(2+). N-linked (GlcNAc...) asparagine glycosylation is found at Asn1604 and Asn1650. Cystine bridges form between Cys1612–Cys1733 and Cys1655–Cys1689.

Belongs to the fibrillar collagen family. As to quaternary structure, trimers composed of three different chains: alpha 1(XI), alpha 2(XI), and alpha 3(XI). Alpha 3(XI) is a post-translational modification of alpha 1(II). Alpha 1(V) can also be found instead of alpha 3(XI)=1(II). Post-translationally, prolines at the third position of the tripeptide repeating unit (G-X-Y) are hydroxylated in some or all of the chains.

It is found in the secreted. Its subcellular location is the extracellular space. The protein resides in the extracellular matrix. In terms of biological role, may play an important role in fibrillogenesis by controlling lateral growth of collagen II fibrils. The sequence is that of Collagen alpha-2(XI) chain (COL11A2) from Bos taurus (Bovine).